A 236-amino-acid polypeptide reads, in one-letter code: DNA repair protein RecO (236 aa).

The protein belongs to the RecO family.

In terms of biological role, involved in DNA repair and RecF pathway recombination. This chain is DNA repair protein RecO, found in Stutzerimonas stutzeri (strain A1501) (Pseudomonas stutzeri).